The primary structure comprises 92 residues: PqqA binding protein (92 aa).

Belongs to the PqqD family. Monomer. Interacts with PqqE.

It functions in the pathway cofactor biosynthesis; pyrroloquinoline quinone biosynthesis. Functions as a PqqA binding protein and presents PqqA to PqqE, in the pyrroloquinoline quinone (PQQ) biosynthetic pathway. The sequence is that of PqqA binding protein from Xanthomonas campestris pv. campestris (strain 8004).